The following is a 360-amino-acid chain: Chorismate synthase (360 aa).

Residue Arg-47 participates in NADP(+) binding. FMN is bound by residues 124–126 (RAS), Gly-286, 301–305 (KPTAT), and Arg-327.

The protein belongs to the chorismate synthase family. As to quaternary structure, homotetramer. It depends on FMNH2 as a cofactor.

The catalysed reaction is 5-O-(1-carboxyvinyl)-3-phosphoshikimate = chorismate + phosphate. It participates in metabolic intermediate biosynthesis; chorismate biosynthesis; chorismate from D-erythrose 4-phosphate and phosphoenolpyruvate: step 7/7. Functionally, catalyzes the anti-1,4-elimination of the C-3 phosphate and the C-6 proR hydrogen from 5-enolpyruvylshikimate-3-phosphate (EPSP) to yield chorismate, which is the branch point compound that serves as the starting substrate for the three terminal pathways of aromatic amino acid biosynthesis. This reaction introduces a second double bond into the aromatic ring system. The polypeptide is Chorismate synthase (Synechococcus sp. (strain RCC307)).